The chain runs to 413 residues: Cardiolipin synthase B (413 aa).

PLD phosphodiesterase domains lie at 108–135 and 285–312; these read VFRRMHRKIVVIDARIAFIGGLNYSAEH and RRRPLHGKVALMDDHWATVGSSNLDPLS. Residues H113, K115, D120, H290, K292, and D297 contribute to the active site. A disordered region spans residues 390–413; sequence VDPPAQPTMETQDRVETENTGVKP.

It belongs to the phospholipase D family. Cardiolipin synthase subfamily. ClsB sub-subfamily.

It is found in the cell membrane. The enzyme catalyses 2 a 1,2-diacyl-sn-glycero-3-phospho-(1'-sn-glycerol) = a cardiolipin + glycerol. Its function is as follows. Catalyzes the phosphatidyl group transfer from one phosphatidylglycerol molecule to another to form cardiolipin (CL) (diphosphatidylglycerol) and glycerol. The sequence is that of Cardiolipin synthase B from Escherichia coli O157:H7.